The chain runs to 254 residues: 3-deoxy-manno-octulosonate cytidylyltransferase (254 aa).

Belongs to the KdsB family.

Its subcellular location is the cytoplasm. It catalyses the reaction 3-deoxy-alpha-D-manno-oct-2-ulosonate + CTP = CMP-3-deoxy-beta-D-manno-octulosonate + diphosphate. Its pathway is nucleotide-sugar biosynthesis; CMP-3-deoxy-D-manno-octulosonate biosynthesis; CMP-3-deoxy-D-manno-octulosonate from 3-deoxy-D-manno-octulosonate and CTP: step 1/1. The protein operates within bacterial outer membrane biogenesis; lipopolysaccharide biosynthesis. Functionally, activates KDO (a required 8-carbon sugar) for incorporation into bacterial lipopolysaccharide in Gram-negative bacteria. The chain is 3-deoxy-manno-octulosonate cytidylyltransferase from Pseudomonas aeruginosa (strain UCBPP-PA14).